The chain runs to 313 residues: Olfactory receptor 10G3 (313 aa).

Residues 1–25 (MERINSTLLTAFILTGIPYPLRLRT) are Extracellular-facing. A glycan (N-linked (GlcNAc...) asparagine) is linked at Asn5. The chain crosses the membrane as a helical span at residues 26-46 (LFFVFFFLIYILTQLGNLLIL). Topologically, residues 47-54 (ITVWADPR) are cytoplasmic. Residues 55 to 76 (LHARPMYIFLGVLSVIDMSISS) form a helical membrane-spanning segment. Residues 77-100 (IIVPRLMMNFTLGVKPIPFGGCVA) are Extracellular-facing. N-linked (GlcNAc...) asparagine glycosylation is present at Asn85. A disulfide bond links Cys98 and Cys190. The chain crosses the membrane as a helical span at residues 101 to 121 (QLYFYHFLGSTQCFLYTLMAY). The Cytoplasmic portion of the chain corresponds to 122-140 (DRYLAICQPLRYPVLMTAK). Residues 141 to 161 (LSALLVAGAWMAGSIHGALQA) traverse the membrane as a helical segment. Topologically, residues 162–198 (ILTFRLPYCGPNQVDYFFCDIPAVLRLACADTTVNEL) are extracellular. The helical transmembrane segment at 199–218 (VTFVDIGVVVASCFSLILLS) threads the bilayer. Residues 219 to 238 (YIQIIQAILRIHTADGRRRA) are Cytoplasmic-facing. Residues 239 to 259 (FSTCGAHVTVVTVYYVPCAFI) traverse the membrane as a helical segment. At 260 to 270 (YLRPETNSPLD) the chain is on the extracellular side. Residues 271–291 (GAAALVPTAITPFLNPLIYTL) traverse the membrane as a helical segment. The Cytoplasmic segment spans residues 292-313 (RNQEVKLALKRMLRSPRTPSEV).

It belongs to the G-protein coupled receptor 1 family.

The protein localises to the cell membrane. Functionally, odorant receptor. The sequence is that of Olfactory receptor 10G3 (OR10G3) from Homo sapiens (Human).